The sequence spans 202 residues: dITP/XTP pyrophosphatase (202 aa).

10–15 is a substrate binding site; it reads TSNRHK. Aspartate 70 acts as the Proton acceptor in catalysis. Residue aspartate 70 coordinates Mg(2+). Residues serine 71, 153–156, lysine 176, and 181–182 contribute to the substrate site; these read FGYD and HR.

This sequence belongs to the HAM1 NTPase family. In terms of assembly, homodimer. Requires Mg(2+) as cofactor.

The catalysed reaction is XTP + H2O = XMP + diphosphate + H(+). The enzyme catalyses dITP + H2O = dIMP + diphosphate + H(+). It catalyses the reaction ITP + H2O = IMP + diphosphate + H(+). In terms of biological role, pyrophosphatase that catalyzes the hydrolysis of nucleoside triphosphates to their monophosphate derivatives, with a high preference for the non-canonical purine nucleotides XTP (xanthosine triphosphate), dITP (deoxyinosine triphosphate) and ITP. Seems to function as a house-cleaning enzyme that removes non-canonical purine nucleotides from the nucleotide pool, thus preventing their incorporation into DNA/RNA and avoiding chromosomal lesions. This is dITP/XTP pyrophosphatase from Methylacidiphilum infernorum (isolate V4) (Methylokorus infernorum (strain V4)).